Reading from the N-terminus, the 138-residue chain is Ribosome-binding factor A (138 aa).

Residues 119–138 are disordered; sequence DMDEKKNSDEKRDSDEKLED.

It belongs to the RbfA family. As to quaternary structure, monomer. Binds 30S ribosomal subunits, but not 50S ribosomal subunits or 70S ribosomes.

The protein localises to the cytoplasm. One of several proteins that assist in the late maturation steps of the functional core of the 30S ribosomal subunit. Associates with free 30S ribosomal subunits (but not with 30S subunits that are part of 70S ribosomes or polysomes). Required for efficient processing of 16S rRNA. May interact with the 5'-terminal helix region of 16S rRNA. This chain is Ribosome-binding factor A, found in Alkaliphilus metalliredigens (strain QYMF).